A 430-amino-acid polypeptide reads, in one-letter code: DNA-binding protein cre-1 (430 aa).

Positions 1–19 are enriched in polar residues; that stretch reads MQRVQSAVDFSNLLNPSES. Disordered regions lie at residues 1–77, 97–187, 265–340, and 357–430; these read MQRV…LPRP, IRTH…PHSY, SRSH…RNLS, and LDGQ…MDRL. A compositionally biased stretch (low complexity) spans 30-46; the sequence is PRQQTAQPQQQQQQPQP. C2H2-type zinc fingers lie at residues 78–100 and 106–130; these read YKCP…IRTH and HACQ…SRIH. Basic and acidic residues predominate over residues 97–106; the sequence is IRTHTGEKPH. 2 stretches are compositionally biased toward polar residues: residues 130-147 and 175-187; these read HSNP…QQQH and AMSS…PHSY. The segment covering 268-277 has biased composition (basic and acidic residues); it reads HSHEDHDDHY. Residues 289 to 303 are compositionally biased toward low complexity; that stretch reads PNSPNSTAPSSPTFS. Positions 412–422 are enriched in polar residues; sequence SVRNSSSTSLS.

It belongs to the creA/MIG C2H2-type zinc-finger protein family.

It localises to the nucleus. Functionally, involved in carbon catabolite repression. Represses the transcription of a number of genes by binding to a GC-rich region in their promoter. The sequence is that of DNA-binding protein cre-1 (cre-1) from Neurospora crassa (strain ATCC 24698 / 74-OR23-1A / CBS 708.71 / DSM 1257 / FGSC 987).